The chain runs to 216 residues: uncharacterized protein (216 aa).

The N-acetyltransferase domain occupies 1–216 (MVVKIVEAYE…DVTFLKLKLK (216 aa)).

This sequence belongs to the acetyltransferase family.

This is an uncharacterized protein from Dictyostelium discoideum (Social amoeba).